Here is a 418-residue protein sequence, read N- to C-terminus: Sterigmatocystin 8-O-methyltransferase (418 aa).

A propeptide spanning residues 1–41 (MTLPNKAALVGLAHTLSEQVKRYLVTADETKSPEDHKLCIE) is cleaved from the precursor. Position 170–176 (170–176 (MRSAAYF)) interacts with substrate. Residues 206–225 (LFDYYSTVDEVRGRRFDLGM) form a substrate binding region. S-adenosyl-L-methionine-binding positions include 254-255 (GG), Asp-277, 297-298 (DI), and Arg-313. Catalysis depends on His-317, which acts as the Proton acceptor.

Belongs to the class I-like SAM-binding methyltransferase superfamily. Cation-independent O-methyltransferase family. COMT subfamily.

The catalysed reaction is sterigmatocystin + S-adenosyl-L-methionine = 8-O-methylsterigmatocystin + S-adenosyl-L-homocysteine + H(+). The enzyme catalyses dihydrosterigmatocystin + S-adenosyl-L-methionine = 8-O-methyldihydrosterigmatocystin + S-adenosyl-L-homocysteine + H(+). Its pathway is mycotoxin biosynthesis; aflatoxin biosynthesis. In terms of biological role, involved in the conversion of sterigmatocystin to O-methylsterigmatocystin (OMST) and dihydrosterigmatocystin to dihydro-o-methylsterigmatocystin in the aflatoxin biosynthesis pathway. The protein is Sterigmatocystin 8-O-methyltransferase (omtA) of Aspergillus flavus (strain ATCC 200026 / FGSC A1120 / IAM 13836 / NRRL 3357 / JCM 12722 / SRRC 167).